Here is a 659-residue protein sequence, read N- to C-terminus: Threonine--tRNA ligase (659 aa).

The region spanning 7–70 (VQATVTVTFP…TDDATVEIIT (64 aa)) is the TGS domain. The tract at residues 255-557 (DHRKLGAELE…LIEHTAGNFP (303 aa)) is catalytic. Zn(2+) is bound by residues Cys-353, His-404, and His-534.

Belongs to the class-II aminoacyl-tRNA synthetase family. As to quaternary structure, homodimer. Zn(2+) is required as a cofactor.

Its subcellular location is the cytoplasm. It carries out the reaction tRNA(Thr) + L-threonine + ATP = L-threonyl-tRNA(Thr) + AMP + diphosphate + H(+). Its function is as follows. Catalyzes the attachment of threonine to tRNA(Thr) in a two-step reaction: L-threonine is first activated by ATP to form Thr-AMP and then transferred to the acceptor end of tRNA(Thr). Also edits incorrectly charged L-seryl-tRNA(Thr). This is Threonine--tRNA ligase from Chlorobium phaeobacteroides (strain BS1).